A 146-amino-acid polypeptide reads, in one-letter code: Putative pre-16S rRNA nuclease (146 aa).

This sequence belongs to the YqgF nuclease family.

The protein resides in the cytoplasm. Its function is as follows. Could be a nuclease involved in processing of the 5'-end of pre-16S rRNA. In Dechloromonas aromatica (strain RCB), this protein is Putative pre-16S rRNA nuclease.